A 397-amino-acid chain; its full sequence is Mannonate dehydratase (397 aa).

Belongs to the mannonate dehydratase family. The cofactor is Fe(2+). It depends on Mn(2+) as a cofactor.

It catalyses the reaction D-mannonate = 2-dehydro-3-deoxy-D-gluconate + H2O. The protein operates within carbohydrate metabolism; pentose and glucuronate interconversion. Functionally, catalyzes the dehydration of D-mannonate. The polypeptide is Mannonate dehydratase (Yersinia pestis bv. Antiqua (strain Antiqua)).